Here is a 62-residue protein sequence, read N- to C-terminus: Kininogen-1 (62 aa).

A signal peptide spans 1–22; that stretch reads MDILKKSLFLVLFLGLVSFSIC. The interval 24–62 is disordered; the sequence is EEKRDTEEEENDDEIEEESEEKKREAPERPPGFTPFRIY. Acidic residues predominate over residues 30–42; it reads EEEENDDEIEEES. At proline 54 the chain carries 4-hydroxyproline; partial. At tyrosine 62 the chain carries Sulfotyrosine.

This sequence belongs to the frog skin active peptide (FSAP) family. Bradykinin-related peptide subfamily. Expressed by the skin glands.

It localises to the secreted. In terms of biological role, inhibits ACE with a Ki of 1.6 uM, and targets B2 bradykinin receptor (BDKRB2). Provokes contraction of smooth muscle preparation (ileum). In vivo, induces an early hyperalgesic effects in living rats after intraplantar injection. The sequence is that of Kininogen-1 from Phyllomedusa sauvagei (Sauvage's leaf frog).